The chain runs to 649 residues: Probable potassium transport system protein Kup (649 aa).

A run of 12 helical transmembrane segments spans residues 1–21 (MAIVALGVVYGDIGTSPLYTM), 42–62 (ILSLVFWSITLITTVKYVFIA), 84–104 (GAWLAIPAMLGGAAFLADSVL), 126–146 (IMSGNKELTLMITIVIIVCLF), 159–179 (TFGTVVMIWFSFLAVVGLVNL), 195–215 (VEFLFSHHNAAGLAVMGTVFL), 235–255 (IYFTWPFIKIALVFCYFGQGA), 286–306 (VAVLLSVCAGVIASQALITGA), 334–354 (LYIPVVNAVLCVSTLLVLAMF), 364–384 (YGLALTVTMITTTILLAVYIW), 390–410 (VGAVVFTVVFLAIQFLFFFAS), and 414–434 (FLHGGWFTMLLTLAILLIMYT).

Belongs to the HAK/KUP transporter (TC 2.A.72) family.

The protein resides in the cell membrane. It carries out the reaction K(+)(in) + H(+)(in) = K(+)(out) + H(+)(out). Functionally, transport of potassium into the cell. Likely operates as a K(+):H(+) symporter. The protein is Probable potassium transport system protein Kup of Bifidobacterium adolescentis (strain ATCC 15703 / DSM 20083 / NCTC 11814 / E194a).